The sequence spans 152 residues: MTITDLVLILFIAALLAYALYDQFIMPRRNGPTLLSIALLRRGRVDSVIFVGLVAILIYNNVTSHGAQMTTWLLSALALMGFYIFWIRTPRIIFKQRGFFFANVWIEYNRIKEMNLSEDGVLVMQLEQRRLLIRVRNIDNLEKIYKLIIENQ.

3 helical membrane-spanning segments follow: residues 6 to 26 (LVLI…QFIM), 45 to 65 (VDSV…VTSH), and 67 to 87 (AQMT…IFWI).

The protein belongs to the UPF0266 family.

The protein resides in the cell inner membrane. The sequence is that of UPF0266 membrane protein YobD from Salmonella dublin (strain CT_02021853).